The primary structure comprises 316 residues: MQILLANPRGFCAGVDRAISIVERALELFGTPIYVRHEVVHNRYVVNGLRERGAIFIEQIEDVPDGAILIFSAHGVSQAVRNEAKSRDLTVFDATCPLVTKVHMEVARASKKGIEAILIGHAGHPEVEGTMGQYSNADGGMYLVESPEDVWQLQVKDESNLCFMTQTTLSVDDTYAVIDALRERFPQIVGPRKDDICYATTNRQEAVRHLSDKADVVFVVGSKNSSNSNRLAELAQRAGKAAYLIDSAEDIQESWVEGASHVGVTAGASAPDILVQQVIQRLKALGGKVAVEMQGREENIVFEVPKELRVEVKQVD.

C12 lines the [4Fe-4S] cluster pocket. Positions 41 and 74 each coordinate (2E)-4-hydroxy-3-methylbut-2-enyl diphosphate. Dimethylallyl diphosphate contacts are provided by H41 and H74. The isopentenyl diphosphate site is built by H41 and H74. C96 serves as a coordination point for [4Fe-4S] cluster. H124 is a (2E)-4-hydroxy-3-methylbut-2-enyl diphosphate binding site. H124 contributes to the dimethylallyl diphosphate binding site. H124 contributes to the isopentenyl diphosphate binding site. The Proton donor role is filled by E126. T167 contributes to the (2E)-4-hydroxy-3-methylbut-2-enyl diphosphate binding site. C197 contacts [4Fe-4S] cluster. (2E)-4-hydroxy-3-methylbut-2-enyl diphosphate is bound by residues S225, S226, N227, and S269. Dimethylallyl diphosphate-binding residues include S225, S226, N227, and S269. The isopentenyl diphosphate site is built by S225, S226, N227, and S269.

It belongs to the IspH family. Homodimer. [4Fe-4S] cluster is required as a cofactor.

It catalyses the reaction isopentenyl diphosphate + 2 oxidized [2Fe-2S]-[ferredoxin] + H2O = (2E)-4-hydroxy-3-methylbut-2-enyl diphosphate + 2 reduced [2Fe-2S]-[ferredoxin] + 2 H(+). The catalysed reaction is dimethylallyl diphosphate + 2 oxidized [2Fe-2S]-[ferredoxin] + H2O = (2E)-4-hydroxy-3-methylbut-2-enyl diphosphate + 2 reduced [2Fe-2S]-[ferredoxin] + 2 H(+). It participates in isoprenoid biosynthesis; dimethylallyl diphosphate biosynthesis; dimethylallyl diphosphate from (2E)-4-hydroxy-3-methylbutenyl diphosphate: step 1/1. It functions in the pathway isoprenoid biosynthesis; isopentenyl diphosphate biosynthesis via DXP pathway; isopentenyl diphosphate from 1-deoxy-D-xylulose 5-phosphate: step 6/6. Functionally, catalyzes the conversion of 1-hydroxy-2-methyl-2-(E)-butenyl 4-diphosphate (HMBPP) into a mixture of isopentenyl diphosphate (IPP) and dimethylallyl diphosphate (DMAPP). Acts in the terminal step of the DOXP/MEP pathway for isoprenoid precursor biosynthesis. The protein is 4-hydroxy-3-methylbut-2-enyl diphosphate reductase of Pectobacterium carotovorum subsp. carotovorum (strain PC1).